The following is a 174-amino-acid chain: ATP synthase subunit delta (174 aa).

The protein belongs to the ATPase delta chain family. In terms of assembly, F-type ATPases have 2 components, F(1) - the catalytic core - and F(0) - the membrane proton channel. F(1) has five subunits: alpha(3), beta(3), gamma(1), delta(1), epsilon(1). F(0) has three main subunits: a(1), b(2) and c(10-14). The alpha and beta chains form an alternating ring which encloses part of the gamma chain. F(1) is attached to F(0) by a central stalk formed by the gamma and epsilon chains, while a peripheral stalk is formed by the delta and b chains.

It localises to the cell inner membrane. Its function is as follows. F(1)F(0) ATP synthase produces ATP from ADP in the presence of a proton or sodium gradient. F-type ATPases consist of two structural domains, F(1) containing the extramembraneous catalytic core and F(0) containing the membrane proton channel, linked together by a central stalk and a peripheral stalk. During catalysis, ATP synthesis in the catalytic domain of F(1) is coupled via a rotary mechanism of the central stalk subunits to proton translocation. In terms of biological role, this protein is part of the stalk that links CF(0) to CF(1). It either transmits conformational changes from CF(0) to CF(1) or is implicated in proton conduction. This chain is ATP synthase subunit delta, found in Francisella philomiragia subsp. philomiragia (strain ATCC 25017 / CCUG 19701 / FSC 153 / O#319-036).